A 248-amino-acid polypeptide reads, in one-letter code: Isoprenyl transferase (248 aa).

Aspartate 23 is an active-site residue. Aspartate 23 lines the Mg(2+) pocket. Residues 24–27 (GNGR), tryptophan 28, arginine 36, histidine 40, and 68–70 (STE) contribute to the substrate site. The active-site Proton acceptor is the asparagine 71. Substrate-binding positions include tryptophan 72, arginine 74, arginine 185, and 191 to 193 (RIS). Glutamate 204 lines the Mg(2+) pocket.

Belongs to the UPP synthase family. In terms of assembly, homodimer. The cofactor is Mg(2+).

Catalyzes the condensation of isopentenyl diphosphate (IPP) with allylic pyrophosphates generating different type of terpenoids. This Neisseria meningitidis serogroup B (strain ATCC BAA-335 / MC58) protein is Isoprenyl transferase.